Reading from the N-terminus, the 524-residue chain is Rho guanine nucleotide exchange factor 3 (524 aa).

Residues Ser46 and Ser69 each carry the phosphoserine modification. Positions 121–303 (KRQEAIFELS…QGIVAEINTK (183 aa)) constitute a DH domain. The region spanning 290-448 (INIIQGIVAE…WLNCIRQAKE (159 aa)) is the PH domain. The tract at residues 461–524 (DSEGLVQGPG…CANSRPEESV (64 aa)) is disordered. Basic and acidic residues predominate over residues 472–484 (ENREPQGETKLEQ).

Interacts with RHOA and RHOB.

It is found in the cytoplasm. In terms of biological role, acts as a guanine nucleotide exchange factor (GEF) for RhoA and RhoB GTPases. This is Rho guanine nucleotide exchange factor 3 (Arhgef3) from Mus musculus (Mouse).